Consider the following 219-residue polypeptide: Nodulation protein NolA (219 aa).

The HTH merR-type domain maps to 10 to 79 (RWRIGELAEA…LHEIRKAMEG (70 aa)). The segment at residues 13-32 (IGELAEATGVTVRTLHHYEH) is a DNA-binding region (H-T-H motif).

Involved in genotype-specific nodulation of soybeans. The chain is Nodulation protein NolA (nolA) from Bradyrhizobium elkanii.